We begin with the raw amino-acid sequence, 221 residues long: Ependymin (221 aa).

The N-terminal stretch at 1–21 (MQAFAVAALSIWLCLGATTLA) is a signal peptide. N-linked (GlcNAc...) asparagine glycosylation is found at N37, N77, and N101.

The protein belongs to the ependymin family. Forms disulfide-linked dimers. In terms of processing, binds calcium through the terminal sialic acids. As to expression, EPDs are synthesized in the meninx and secreted in the cerebrospinal fluid.

The protein resides in the secreted. In terms of biological role, may play a role in neural plasticity. May be involved during axon regeneration. The polypeptide is Ependymin (epd) (Esox lucius (Northern pike)).